The sequence spans 209 residues: Ribosomal RNA large subunit methyltransferase E (209 aa).

Residues G63, W65, D83, D99, and D124 each contribute to the S-adenosyl-L-methionine site. K164 (proton acceptor) is an active-site residue.

Belongs to the class I-like SAM-binding methyltransferase superfamily. RNA methyltransferase RlmE family.

The protein resides in the cytoplasm. The enzyme catalyses uridine(2552) in 23S rRNA + S-adenosyl-L-methionine = 2'-O-methyluridine(2552) in 23S rRNA + S-adenosyl-L-homocysteine + H(+). Functionally, specifically methylates the uridine in position 2552 of 23S rRNA at the 2'-O position of the ribose in the fully assembled 50S ribosomal subunit. The sequence is that of Ribosomal RNA large subunit methyltransferase E from Cronobacter sakazakii (strain ATCC BAA-894) (Enterobacter sakazakii).